The primary structure comprises 38 residues: Large ribosomal subunit protein bL36 (38 aa).

Belongs to the bacterial ribosomal protein bL36 family.

In Synechocystis sp. (strain ATCC 27184 / PCC 6803 / Kazusa), this protein is Large ribosomal subunit protein bL36.